We begin with the raw amino-acid sequence, 166 residues long: Putative universal stress protein SE_1385 (166 aa).

The protein belongs to the universal stress protein A family.

The protein localises to the cytoplasm. This is Putative universal stress protein SE_1385 from Staphylococcus epidermidis (strain ATCC 12228 / FDA PCI 1200).